Here is a 407-residue protein sequence, read N- to C-terminus: 3-oxoacyl-[acyl-carrier-protein] synthase 1 (407 aa).

Residues 1–406 (MKRVVITGFG…GTNVSLILKK (406 aa)) form the Ketosynthase family 3 (KS3) domain. Catalysis depends on for beta-ketoacyl synthase activity residues Cys164, His300, and His336.

It belongs to the thiolase-like superfamily. Beta-ketoacyl-ACP synthases family. Homodimer.

The protein localises to the cytoplasm. It carries out the reaction a fatty acyl-[ACP] + malonyl-[ACP] + H(+) = a 3-oxoacyl-[ACP] + holo-[ACP] + CO2. It catalyses the reaction (3Z)-decenoyl-[ACP] + malonyl-[ACP] + H(+) = 3-oxo-(5Z)-dodecenoyl-[ACP] + holo-[ACP] + CO2. It functions in the pathway lipid metabolism; fatty acid biosynthesis. Its function is as follows. Involved in the type II fatty acid elongation cycle. Catalyzes the elongation of a wide range of acyl-ACP by the addition of two carbons from malonyl-ACP to an acyl acceptor. Can also use unsaturated fatty acids. Catalyzes a key reaction in unsaturated fatty acid (UFA) synthesis, the elongation of the cis-3-decenoyl-ACP produced by FabA. The chain is 3-oxoacyl-[acyl-carrier-protein] synthase 1 (fabB) from Buchnera aphidicola subsp. Schizaphis graminum (strain Sg).